The sequence spans 784 residues: Rabenosyn-5 (784 aa).

At Ala-2 the chain carries N-acetylalanine. Position 3 is a phosphoserine (Ser-3). The C2H2-type zinc finger occupies 14-37 (FLCPLCLKDLQSFYQLHSHYEEEH). A necessary for the correct targeting to endosomes region spans residues 100–263 (RSHLSDFKKH…HCKDTLLKRE (164 aa)). Residues 157–260 (DQDVPFCPDC…CCTHCKDTLL (104 aa)) form an FYVE-type zinc finger. Residues Cys-163, Cys-166, Cys-179, Cys-182, Cys-187, and Cys-190 each coordinate Zn(2+). The segment covering 207 to 224 (KESLSTHTSPSQSPNSVH) has biased composition (polar residues). A disordered region spans residues 207-241 (KESLSTHTSPSQSPNSVHGSRRGSISSMSSVSSVL). Phosphoserine occurs at positions 215, 219, 226, and 230. The span at 228–240 (RGSISSMSSVSSV) shows a compositional bias: low complexity. Zn(2+) contacts are provided by Cys-252 and Cys-255. The necessary for interaction with RAB4A stretch occupies residues 264-500 (QQIDEKEHTP…QLQDEYDQQQ (237 aa)). The tract at residues 264-784 (QQIDEKEHTP…TLAKQKGGTD (521 aa)) is necessary for interaction with EHD1. 2 coiled-coil regions span residues 378 to 414 (TKEQ…LEER) and 472 to 531 (QAKA…RELE). The span at 390 to 400 (KEEMERKRAVE) shows a compositional bias: basic and acidic residues. Residues 390 to 429 (KEEMERKRAVERQAALESQRRLEERQSGLASRAANGEVAS) form a disordered region. The UIM domain occupies 496-515 (YDQQQTEKAIELSRRQAEEE). Residues 574–732 (DLGSSPVPSS…DSDSGPEAEE (159 aa)) are disordered. Polar residues predominate over residues 579 to 598 (PVPSSTAPKTPSLSSTQPTR). A necessary for interaction with RAB5A region spans residues 627–784 (PFDEEDLSSP…TLAKQKGGTD (158 aa)). The span at 663-673 (PFEEEDEEEEA) shows a compositional bias: acidic residues. Position 684 is a phosphoserine (Ser-684). The segment covering 722 to 732 (MDSDSGPEAEE) has biased composition (acidic residues).

In terms of assembly, interacts with EHD1, RAB4A, RAB5A, RAB14, RAB22A, RAB24 and VPS45. Binds simultaneously to RAB4A and RAB5A in vitro. Interacts with RAB4A and RAB5A that has been activated by GTP binding.

It is found in the cell membrane. The protein localises to the early endosome membrane. Functionally, rab4/Rab5 effector protein acting in early endocytic membrane fusion and membrane trafficking of recycling endosomes. Required for endosome fusion either homotypically or with clathrin coated vesicles. Plays a role in the lysosomal trafficking of CTSD/cathepsin D from the Golgi to lysosomes. Also promotes the recycling of transferrin directly from early endosomes to the plasma membrane. Binds phospholipid vesicles containing phosphatidylinositol 3-phosphate (PtdInsP3). Plays a role in the recycling of transferrin receptor to the plasma membrane. The polypeptide is Rabenosyn-5 (Homo sapiens (Human)).